The primary structure comprises 76 residues: EMBRYO SURROUNDING FACTOR 1-like protein 8 (76 aa).

The first 22 residues, 1 to 22 (MSSSQFFILCIILISSFPLHEC), serve as a signal peptide directing secretion. Intrachain disulfides connect Cys38/Cys54, Cys43/Cys74, Cys52/Cys70, and Cys55/Cys63.

Belongs to the MEG family. Expressed in flowers.

In Arabidopsis thaliana (Mouse-ear cress), this protein is EMBRYO SURROUNDING FACTOR 1-like protein 8 (ESFL8).